We begin with the raw amino-acid sequence, 461 residues long: Asparagine--tRNA ligase (461 aa).

It belongs to the class-II aminoacyl-tRNA synthetase family. In terms of assembly, homodimer.

It is found in the cytoplasm. It carries out the reaction tRNA(Asn) + L-asparagine + ATP = L-asparaginyl-tRNA(Asn) + AMP + diphosphate + H(+). The chain is Asparagine--tRNA ligase from Oleidesulfovibrio alaskensis (strain ATCC BAA-1058 / DSM 17464 / G20) (Desulfovibrio alaskensis).